The chain runs to 88 residues: RQC P-site tRNA stabilizing factor (88 aa).

Positions 1-60 (MRLDKYLKVSRIIKRRTVAKEVADKGRIKVNGILAKSSTDLKVNDQVEIRFGNKLLLVKV) constitute an S4 RNA-binding domain.

This sequence belongs to the RqcP family. As to quaternary structure, associates with stalled 50S ribosomal subunits. Binds to RqcH, 23S rRNA and the P-site tRNA. Does not require RqcH for association with 50S subunits.

Its function is as follows. Key component of the ribosome quality control system (RQC), a ribosome-associated complex that mediates the extraction of incompletely synthesized nascent chains from stalled ribosomes and their subsequent degradation. RqcH recruits Ala-charged tRNA, and with RqcP directs the elongation of stalled nascent chains on 50S ribosomal subunits, leading to non-templated C-terminal alanine extensions (Ala tail). The Ala tail promotes nascent chain degradation. RqcP is associated with the translocation-like movement of the peptidyl-tRNA from the A-site into the P-site. This is RQC P-site tRNA stabilizing factor from Streptococcus pneumoniae (strain ATCC BAA-255 / R6).